Consider the following 276-residue polypeptide: MDAEIFSLDSLSIYKDINIASAKPSLKERKNIKHYALDHLNIDEKNNAQLFKTLLEDAMRVSSKEILLIVGGSSFYLKSILEGLSRMPKISGEEVVKIEREISTLADPYAFLKSIDPTIAFKIHPNDTYRIHKALEIFYATHTPPSEYFKANPKKPFEHAISLFALSIEKSTLHSNIKQRTKNMLHSGLVEEIKALYTQYPKDSQPFKAIGVKESILFLEKQLTLKELEEAIISNTMKLAKCQNTFNKTQFNNLYVGSVKEVRHAILNHSKSAIKG.

The interaction with substrate tRNA stretch occupies residues 9 to 12 (DSLS).

Belongs to the IPP transferase family. Monomer. Mg(2+) is required as a cofactor.

It catalyses the reaction adenosine(37) in tRNA + dimethylallyl diphosphate = N(6)-dimethylallyladenosine(37) in tRNA + diphosphate. Catalyzes the transfer of a dimethylallyl group onto the adenine at position 37 in tRNAs that read codons beginning with uridine, leading to the formation of N6-(dimethylallyl)adenosine (i(6)A). This Helicobacter pylori (strain HPAG1) protein is tRNA dimethylallyltransferase (miaA).